We begin with the raw amino-acid sequence, 339 residues long: Cilia- and flagella-associated protein 36 (339 aa).

2 coiled-coil regions span residues 142 to 188 (ISDL…ENKQ) and 255 to 330 (NLSQ…EVIL). 2 disordered regions span residues 177–212 (NLTLGEHSENKQSSGSERTPNNTELPVKTQKEEKQP) and 281–318 (KKQESKKMAQNSEEHEEKATCSKQEMTEEEKKSLQRRK). Positions 187–200 (KQSSGSERTPNNTE) are enriched in polar residues. The span at 281–313 (KKQESKKMAQNSEEHEEKATCSKQEMTEEEKKS) shows a compositional bias: basic and acidic residues.

Belongs to the CFAP36 family.

It localises to the nucleus. The protein localises to the cytoplasm. The protein resides in the cell projection. It is found in the cilium. Its subcellular location is the flagellum. This is Cilia- and flagella-associated protein 36 from Xenopus tropicalis (Western clawed frog).